A 282-amino-acid chain; its full sequence is Nucleotide-binding protein Fnod_1159 (282 aa).

9 to 16 provides a ligand contact to ATP; the sequence is GHSGAGKS. 57–60 is a GTP binding site; that stretch reads DIRS.

The protein belongs to the RapZ-like family.

In terms of biological role, displays ATPase and GTPase activities. The protein is Nucleotide-binding protein Fnod_1159 of Fervidobacterium nodosum (strain ATCC 35602 / DSM 5306 / Rt17-B1).